The following is a 233-amino-acid chain: Glutathione S-transferase 2 (233 aa).

A GST N-terminal domain is found at 17–101 (QKMIIYDTPA…YIDALDGTPT (85 aa)). Glutathione-binding positions include Tyr29, His58, Val72, 85-86 (EC), and His133. The region spanning 106–233 (TPLEKGVIHM…KLLEIRSKSS (128 aa)) is the GST C-terminal domain.

This sequence belongs to the GST superfamily. As to quaternary structure, homodimer.

The enzyme catalyses RX + glutathione = an S-substituted glutathione + a halide anion + H(+). In Saccharomyces cerevisiae (strain ATCC 204508 / S288c) (Baker's yeast), this protein is Glutathione S-transferase 2 (GTT2).